Here is a 144-residue protein sequence, read N- to C-terminus: C-C motif chemokine 25 (144 aa).

The first 23 residues, 1 to 23 (MKLWLFACLVACFVGAWMPVVHA), serve as a signal peptide directing secretion. 2 cysteine pairs are disulfide-bonded: C30–C58 and C31–C73. Residues 98 to 144 (KSASDSQTERKKSNHMKSKVENPNSTSVRSATLGHPRMVMMPRKTNN) form a disordered region. The segment covering 118-127 (ENPNSTSVRS) has biased composition (polar residues).

Belongs to the intercrine beta (chemokine CC) family. As to expression, specifically expressed by thymic dendritic cells. High levels in thymus and small intestine.

Its subcellular location is the secreted. Its function is as follows. Potentially involved in T-cell development. Recombinant protein shows chemotactic activity on thymocytes, macrophages, THP-1 cells, and dendritics cells but is inactive on peripheral blood lymphocytes and neutrophils. Binds to CCR9. Binds to atypical chemokine receptor ACKR4 and mediates the recruitment of beta-arrestin (ARRB1/2) to ACKR4. This chain is C-C motif chemokine 25 (Ccl25), found in Mus musculus (Mouse).